The primary structure comprises 386 residues: Demethylsterigmatocystin 6-O-methyltransferase (386 aa).

137–150 is a binding site for substrate; the sequence is FDISGPCTQILPDF. Residues 177 to 197 form a substrate binding region; sequence MFEWMPQHPKHMESLGHLMAL. S-adenosyl-L-methionine contacts are provided by residues 228 to 229, Asp-253, 273 to 274, and Arg-289; these read GG and NF. His-293 serves as the catalytic Proton acceptor.

Belongs to the class I-like SAM-binding methyltransferase superfamily. Cation-independent O-methyltransferase family. COMT subfamily.

It carries out the reaction 6-demethylsterigmatocystin + S-adenosyl-L-methionine = sterigmatocystin + S-adenosyl-L-homocysteine + H(+). The protein operates within mycotoxin biosynthesis; aflatoxin biosynthesis. Demethylsterigmatocystin 6-O-methyltransferase; part of the gene cluster that mediates the biosynthesis of aflatoxins, a group of polyketide-derived furanocoumarins, and part of the most toxic and carcinogenic compounds among the known mycotoxins. The four major aflatoxins produced by A.parasiticus are aflatoxin B1 (AFB1), aflatoxin B2 (AFB2), aflatoxin G1 (AFG1) and aflatoxin G2 (AFG2). Within the aflatoxin pathway, the methyltransferase aflO then catalyzes the modification of demethylsterigmatocystin (DMST) to sterigmatocystin (ST), and of dihydrodemethylsterigmatocystin (DMDHST) to dihydrosterigmatocystin (DHST). The biosynthesis of aflatoxins begins with the norsolorinic acid synthase aflC that combines a hexanoyl starter unit produced by the fatty acid synthase aflA/aflB and 7 malonyl-CoA extender units to synthesize the precursor NOR. The second step is the conversion of NOR to averantin and requires the norsolorinic acid ketoreductase aflD, which catalyzes the dehydration of norsolorinic acid to form (1'S)-averantin. The norsolorinic acid reductases aflE and aflF may also play a role in the conversion of NOR to AVN. The cytochrome P450 monooxygenase aflG then catalyzes the hydroxylation of AVN to 5'hydroxyaverantin (HAVN). The next step is performed by the 5'-hydroxyaverantin dehydrogenase aflH that transforms HAVN to 5'-oxoaverantin (OAVN) which is further converted to averufin (AVF) by aflK that plays a dual role in the pathway, as a 5'-oxoaverantin cyclase that mediates conversion of 5'-oxoaverantin, as well as a versicolorin B synthase in a later step in the pathway. The averufin oxidase aflI catalyzes the conversion of AVF to versiconal hemiacetal acetate (VHA). VHA is then the substrate for the versiconal hemiacetal acetate esterase aflJ to yield versiconal (VAL). Versicolorin B synthase aflK then converts VAL to versicolorin B (VERB) by closing the bisfuran ring of aflatoxin which is required for DNA-binding, thus giving to aflatoxin its activity as a mutagen. Then, the activity of the versicolorin B desaturase aflL leads to versicolorin A (VERA). A branch point starts from VERB since it can also be converted to dihydrodemethylsterigmatocystin (DMDHST), probably also by aflL, VERA being a precursor for aflatoxins B1 and G1, and DMDHST for aflatoxins B2 and G2. Next, the versicolorin reductase aflM and the cytochrome P450 monooxygenase aflN are involved in conversion of VERA to demethylsterigmatocystin (DMST). AflX and aflY seem also involved in this step, through probable aflX-mediated epoxide ring-opening step following versicolorin A oxidation and aflY-mediated Baeyer-Villiger oxidation required for the formation of the xanthone ring. The methyltransferase aflO then leads to the modification of DMST to sterigmatocystin (ST), and of DMDHST to dihydrosterigmatocystin (DHST). Both ST and DHST are then substrates of the O-methyltransferase aflP to yield O-methylsterigmatocystin (OMST) and dihydro-O-methylsterigmatocystin (DHOMST), respectively. Finally OMST is converted to aflatoxins B1 and G1, and DHOMST to aflatoxins B2 and G2, via the action of several enzymes including O-methylsterigmatocystin oxidoreductase aflQ, the cytochrome P450 monooxygenase aflU, but also the NADH-dependent flavin oxidoreductase nadA which is specifically required for the synthesis of AFG1. The chain is Demethylsterigmatocystin 6-O-methyltransferase from Aspergillus parasiticus (strain ATCC 56775 / NRRL 5862 / SRRC 143 / SU-1).